A 149-amino-acid chain; its full sequence is uncharacterized protein (149 aa).

The next 2 helical transmembrane spans lie at 91-111 and 122-142; these read IFILLCLLICLGLALMGLFHY and ISILFWSGSAFLIIVLIICLL.

Its subcellular location is the membrane. This is an uncharacterized protein from Dictyostelium discoideum (Social amoeba).